Here is a 615-residue protein sequence, read N- to C-terminus: Putative binding protein BRA0576/BS1330_II0571 (615 aa).

A signal peptide spans 1–29 (MLNRFIAFFRSVFLIGLVATAFGALPARA).

Belongs to the bacterial solute-binding protein 5 family.

It is found in the periplasm. The polypeptide is Putative binding protein BRA0576/BS1330_II0571 (Brucella suis biovar 1 (strain 1330)).